We begin with the raw amino-acid sequence, 156 residues long: EPIDERMAL PATTERNING FACTOR-like protein 6 (156 aa).

An N-terminal signal peptide occupies residues 1–47 (MGFERTSSSLSLLSSSLPSSLQPSENTRAKFSLFYLLLLFFVLCVIA). 3 disulfides stabilise this stretch: Cys113–Cys147, Cys117–Cys123, and Cys120–Cys149.

It belongs to the plant cysteine rich small secretory peptide family. Epidermal patterning factor subfamily. In terms of assembly, interacts with ERECTA. As to expression, expressed in the internal layers of the root, hypocotyl and stems, and in the midrib of developing rosette leaves. Detected in a ring of cells surrounding the vascular elements. Expressed in developing stems soon after bolting, in inflorescence stems, near the root apex and in the chalazal region of ovules. Not found in cotyledons or in stomatal precursors or stomata.

It is found in the secreted. Its function is as follows. Acts primarily as positive regulator of inflorescence growth. Endodermal expression is sufficient for proper inflorescence architecture. Redundantly involved with EPFL4 in procambial development regulation. Also acts as tissue-specific regulator of epidermal pattern. Controls stomatal patterning by repressing stomatal production. TMM (AC Q9SSD1) functions to dampen or block CHAL signaling. Not processed by SDD1 (AC O64495). Acts as growth-regulatory ligand for ERECTA family receptors. The sequence is that of EPIDERMAL PATTERNING FACTOR-like protein 6 from Arabidopsis thaliana (Mouse-ear cress).